The following is a 362-amino-acid chain: Aspartate-semialdehyde dehydrogenase (362 aa).

Thr15, Gly16, Ala17, Val18, Ser40, Ser43, Leu87, and Asp88 together coordinate NADP(+). Catalysis depends on Cys154, which acts as the Acyl-thioester intermediate. Gly186 is an NADP(+) binding site. The Proton acceptor role is filled by His251. Asn340 is an NADP(+) binding site.

The protein belongs to the aspartate-semialdehyde dehydrogenase family. Homotetramer; dimer of dimers.

It localises to the cytoplasm. The protein resides in the cytosol. It is found in the nucleus. The enzyme catalyses L-aspartate 4-semialdehyde + phosphate + NADP(+) = 4-phospho-L-aspartate + NADPH + H(+). The protein operates within amino-acid biosynthesis; L-methionine biosynthesis via de novo pathway; L-homoserine from L-aspartate: step 2/3. Its pathway is amino-acid biosynthesis; L-threonine biosynthesis; L-threonine from L-aspartate: step 2/5. In terms of biological role, catalyzes the NADPH-dependent formation of L-aspartate 4-semialdehyde (L-ASA) by the reductive dephosphorylation of 4-phospho-L-aspartate. Mediates the second step in the biosynthesis of amino acids that derive from aspartate (the aspartate family of amino acids), including methioinine and threonine, the latter of which is a precursor to isoleucine. This Trichophyton rubrum (strain ATCC MYA-4607 / CBS 118892) (Athlete's foot fungus) protein is Aspartate-semialdehyde dehydrogenase.